The following is a 595-amino-acid chain: O-phosphoseryl-tRNA(Sec) selenium transferase (595 aa).

Arginine 75 contacts pyridoxal 5'-phosphate. The phosphate loop (P-loop) stretch occupies residues glycine 96–proline 106. The substrate site is built by arginine 97, serine 98, and glutamine 105. The segment covering arginine 174–alanine 187 has biased composition (polar residues). 2 disordered regions span residues arginine 174–proline 208 and serine 257–serine 278. Basic and acidic residues predominate over residues glutamate 196–threonine 205. Arginine 358 is a binding site for tRNA. At lysine 371 the chain carries N6-(pyridoxal phosphate)lysine. Position 400 (arginine 400) interacts with substrate.

Belongs to the SepSecS family. As to quaternary structure, homotetramer composed of two homodimers. It depends on pyridoxal 5'-phosphate as a cofactor.

It is found in the cytoplasm. It carries out the reaction O-phospho-L-seryl-tRNA(Sec) + selenophosphate + H2O = L-selenocysteinyl-tRNA(Sec) + 2 phosphate. It participates in aminoacyl-tRNA biosynthesis; selenocysteinyl-tRNA(Sec) biosynthesis; selenocysteinyl-tRNA(Sec) from L-seryl-tRNA(Sec) (archaeal/eukaryal route): step 2/2. Functionally, converts O-phosphoseryl-tRNA(Sec) to selenocysteinyl-tRNA(Sec) required for selenoprotein biosynthesis. This chain is O-phosphoseryl-tRNA(Sec) selenium transferase, found in Leishmania donovani.